The sequence spans 356 residues: S-adenosylmethionine:tRNA ribosyltransferase-isomerase (356 aa).

This sequence belongs to the QueA family. As to quaternary structure, monomer.

The protein resides in the cytoplasm. It carries out the reaction 7-aminomethyl-7-carbaguanosine(34) in tRNA + S-adenosyl-L-methionine = epoxyqueuosine(34) in tRNA + adenine + L-methionine + 2 H(+). The protein operates within tRNA modification; tRNA-queuosine biosynthesis. In terms of biological role, transfers and isomerizes the ribose moiety from AdoMet to the 7-aminomethyl group of 7-deazaguanine (preQ1-tRNA) to give epoxyqueuosine (oQ-tRNA). In Yersinia pseudotuberculosis serotype IB (strain PB1/+), this protein is S-adenosylmethionine:tRNA ribosyltransferase-isomerase.